The primary structure comprises 353 residues: Histidinol-phosphate aminotransferase (353 aa).

At K218 the chain carries N6-(pyridoxal phosphate)lysine.

The protein belongs to the class-II pyridoxal-phosphate-dependent aminotransferase family. Histidinol-phosphate aminotransferase subfamily. As to quaternary structure, homodimer. Pyridoxal 5'-phosphate is required as a cofactor.

It catalyses the reaction L-histidinol phosphate + 2-oxoglutarate = 3-(imidazol-4-yl)-2-oxopropyl phosphate + L-glutamate. It functions in the pathway amino-acid biosynthesis; L-histidine biosynthesis; L-histidine from 5-phospho-alpha-D-ribose 1-diphosphate: step 7/9. The chain is Histidinol-phosphate aminotransferase from Synechococcus sp. (strain JA-3-3Ab) (Cyanobacteria bacterium Yellowstone A-Prime).